The sequence spans 118 residues: Large ribosomal subunit protein uL22 (118 aa).

This sequence belongs to the universal ribosomal protein uL22 family. Part of the 50S ribosomal subunit.

Its function is as follows. This protein binds specifically to 23S rRNA; its binding is stimulated by other ribosomal proteins, e.g. L4, L17, and L20. It is important during the early stages of 50S assembly. It makes multiple contacts with different domains of the 23S rRNA in the assembled 50S subunit and ribosome. In terms of biological role, the globular domain of the protein is located near the polypeptide exit tunnel on the outside of the subunit, while an extended beta-hairpin is found that lines the wall of the exit tunnel in the center of the 70S ribosome. The sequence is that of Large ribosomal subunit protein uL22 from Listeria innocua serovar 6a (strain ATCC BAA-680 / CLIP 11262).